The chain runs to 103 residues: RNA-binding protein YlxQ (103 aa).

The protein belongs to the eukaryotic ribosomal protein eL8 family.

RNA-binding protein that recognizes the K-turn motif present in ribosomal RNA, but also in box C/D and box C'/D' sRNAs. This is RNA-binding protein YlxQ from Enterococcus faecium (Streptococcus faecium).